The chain runs to 78 residues: Apolipoprotein C-I (78 aa).

Positions M1 to G26 are cleaved as a signal peptide.

The protein belongs to the apolipoprotein C1 family.

The protein resides in the secreted. Inhibitor of lipoprotein binding to the low density lipoprotein (LDL) receptor, LDL receptor-related protein, and very low density lipoprotein (VLDL) receptor. Associates with high density lipoproteins (HDL) and the triacylglycerol-rich lipoproteins in the plasma and makes up about 10% of the protein of the VLDL and 2% of that of HDL. Appears to interfere directly with fatty acid uptake and is also the major plasma inhibitor of cholesteryl ester transfer protein (CETP). Binds free fatty acids and reduces their intracellular esterification. Modulates the interaction of APOE with beta-migrating VLDL and inhibits binding of beta-VLDL to the LDL receptor-related protein. The protein is Apolipoprotein C-I (APOC1) of Acinonyx jubatus (Cheetah).